We begin with the raw amino-acid sequence, 168 residues long: Prolyl-tRNA synthetase associated domain-containing protein 1 (168 aa).

This sequence belongs to the PRORSD1 family.

This Xenopus laevis (African clawed frog) protein is Prolyl-tRNA synthetase associated domain-containing protein 1 (prorsd1p).